Reading from the N-terminus, the 154-residue chain is 3-hydroxyacyl-[acyl-carrier-protein] dehydratase FabZ (154 aa).

The active site involves His-59.

It belongs to the thioester dehydratase family. FabZ subfamily.

The protein resides in the cytoplasm. It catalyses the reaction a (3R)-hydroxyacyl-[ACP] = a (2E)-enoyl-[ACP] + H2O. Its function is as follows. Involved in unsaturated fatty acids biosynthesis. Catalyzes the dehydration of short chain beta-hydroxyacyl-ACPs and long chain saturated and unsaturated beta-hydroxyacyl-ACPs. This Bartonella bacilliformis (strain ATCC 35685 / KC583 / Herrer 020/F12,63) protein is 3-hydroxyacyl-[acyl-carrier-protein] dehydratase FabZ.